Reading from the N-terminus, the 455-residue chain is Retinoic acid receptor beta (455 aa).

Residues 1–87 (MTTSGHACPV…PLPPPRVYKP (87 aa)) are modulating. Positions 47-78 (HPPPSGCSTPSPATIETQSTSSEELVPSPPSP) are disordered. The span at 53–66 (CSTPSPATIETQST) shows a compositional bias: polar residues. S77 bears the Phosphoserine mark. NR C4-type zinc fingers lie at residues 88–108 (CFVCQDKSSGYHYGVSACEGC) and 124–148 (CHRDKNCVINKVTRNRCQYCRLQKC). A DNA-binding region (nuclear receptor) is located at residues 88 to 153 (CFVCQDKSSG…RLQKCFEVGM (66 aa)). The interval 154–182 (SKESVRNDRNKKKKETSKQECTESYEMTA) is hinge. One can recognise an NR LBD domain in the interval 183–417 (ELDDLTEKIR…PLIQEMLENS (235 aa)). The disordered stretch occupies residues 415–455 (ENSEGHEPLTPSSSGNTAEHSPSISPSSVENSGVSQSPLVQ). The segment covering 424 to 434 (TPSSSGNTAEH) has biased composition (polar residues). Residues 435–455 (SPSISPSSVENSGVSQSPLVQ) show a composition bias toward low complexity.

It belongs to the nuclear hormone receptor family. NR1 subfamily. Homodimer. Heterodimer; with a RXR molecule. Binds DNA preferentially as a RAR/RXR heterodimer. Heterodimerizes (via NR LBD) with RXRA. Interacts weakly with NCOR2. As to expression, expressed in aortic endothelial cells (at protein level).

It localises to the nucleus. The protein resides in the cytoplasm. Receptor for retinoic acid. Retinoic acid receptors bind as heterodimers to their target response elements in response to their ligands, all-trans or 9-cis retinoic acid, and regulate gene expression in various biological processes. The RXR/RAR heterodimers bind to the retinoic acid response elements (RARE) composed of tandem 5'-AGGTCA-3' sites known as DR1-DR5. In the absence or presence of hormone ligand, acts mainly as an activator of gene expression due to weak binding to corepressors. The RXRA/RARB heterodimer can act as a repressor on the DR1 element and as an activator on the DR5 element. In concert with RARG, required for skeletal growth, matrix homeostasis and growth plate function. The protein is Retinoic acid receptor beta (RARB) of Homo sapiens (Human).